The primary structure comprises 587 residues: Thiol:disulfide interchange protein DsbD 2 (587 aa).

The N-terminal stretch at methionine 1 to alanine 18 is a signal peptide. Topologically, residues glutamine 19 to serine 172 are periplasmic. 2 cysteine pairs are disulfide-bonded: cysteine 124–cysteine 130 and cysteine 188–cysteine 308. A helical membrane pass occupies residues leucine 173–leucine 193. Topologically, residues proline 194–serine 216 are cytoplasmic. The chain crosses the membrane as a helical span at residues tyrosine 217 to glycine 237. Over asparagine 238–proline 246 the chain is Periplasmic. The helical transmembrane segment at tryptophan 247 to phenylalanine 267 threads the bilayer. At glutamate 268–alanine 299 the chain is on the cytoplasmic side. A helical membrane pass occupies residues leucine 300 to isoleucine 320. The Periplasmic segment spans residues alanine 321–glycine 330. A helical membrane pass occupies residues leucine 331–glycine 351. The Cytoplasmic portion of the chain corresponds to serine 352–proline 360. The helical transmembrane segment at tryptophan 361–leucine 381 threads the bilayer. At arginine 382 to proline 383 the chain is on the periplasmic side. A helical membrane pass occupies residues leucine 384–alanine 404. At alanine 405 to alanine 416 the chain is on the cytoplasmic side. Residues valine 417–alanine 437 traverse the membrane as a helical segment. The Periplasmic portion of the chain corresponds to alanine 438 to glycine 587. Residues leucine 448–glutamate 585 enclose the Thioredoxin domain. A disulfide bridge connects residues cysteine 500 and cysteine 503.

It belongs to the thioredoxin family. DsbD subfamily.

The protein resides in the cell inner membrane. It catalyses the reaction [protein]-dithiol + NAD(+) = [protein]-disulfide + NADH + H(+). The catalysed reaction is [protein]-dithiol + NADP(+) = [protein]-disulfide + NADPH + H(+). Functionally, required to facilitate the formation of correct disulfide bonds in some periplasmic proteins and for the assembly of the periplasmic c-type cytochromes. Acts by transferring electrons from cytoplasmic thioredoxin to the periplasm. This transfer involves a cascade of disulfide bond formation and reduction steps. The chain is Thiol:disulfide interchange protein DsbD 2 from Pseudomonas aeruginosa (strain ATCC 15692 / DSM 22644 / CIP 104116 / JCM 14847 / LMG 12228 / 1C / PRS 101 / PAO1).